Reading from the N-terminus, the 346-residue chain is Integrin beta-1-binding protein 2 (346 aa).

Zn(2+) is bound by residues cysteine 5, cysteine 10, cysteine 24, and histidine 27. Positions 5 to 64 (CHNKGCGQHFDPQTNLPDSCCHHPGVPVFHDALKGWSCCRKRTVDFSEFLNIKGCTVGPH) constitute a CHORD 1 domain. Residues 28 to 31 (PGVP) carry the SH3-binding motif. Positions 42, 43, 59, and 64 each coordinate Zn(2+). An SH3-binding motif is present at residues 70-78 (PEAPQPEGP). Residues 70-113 (PEAPQPEGPATSSSLLEQKPPNTIPKSAETLRRERPKSDLPPKL) are disordered. Over residues 79 to 94 (ATSSSLLEQKPPNTIP) the composition is skewed to polar residues. The span at 98–109 (ETLRRERPKSDL) shows a compositional bias: basic and acidic residues. The Zn(2+) site is built by cysteine 150 and cysteine 155. The 60-residue stretch at 150 to 209 (CQNPGCDAVYQGSESDATPCTYHPGAPRFHEGMKSWSCCGIQTLDFGVFLAQPGCRVGRH) folds into the CHORD 2 domain. An SH2-binding motif is present at residues 159–162 (YQGS). Residues cysteine 169 and histidine 172 each coordinate Zn(2+). Residues 173-176 (PGAP) carry the SH3-binding motif. 4 residues coordinate Zn(2+): cysteine 187, cysteine 188, cysteine 204, and histidine 209. The CS domain maps to 216-305 (LASCRHDWHQ…ADPGFWAQLE (90 aa)). Positions 235-238 (YGQI) match the SH2-binding motif. The tract at residues 311-346 (AEKSKSGVGLEMDEEESEDSDDDLSWTEEEEEAMGE) is disordered. Positions 321–346 (EMDEEESEDSDDDLSWTEEEEEAMGE) are enriched in acidic residues.

In terms of assembly, interacts with beta-1 integrin subunit. This interaction is regulated by divalent cations, and it occurs only in absence of calcium.

Its function is as follows. May play a role during maturation and/or organization of muscles cells. The sequence is that of Integrin beta-1-binding protein 2 (ITGB1BP2) from Sus scrofa (Pig).